A 202-amino-acid polypeptide reads, in one-letter code: Casparian strip membrane protein 4 (202 aa).

Topologically, residues 1 to 40 are cytoplasmic; sequence MKSDSIAVDVPAESSSAIKGKAPLLGLARDHTGSGGYKRG. A helical membrane pass occupies residues 41-61; sequence LSIFDFLLRLAAIVAALAAAA. Residues 62–90 lie on the Extracellular side of the membrane; the sequence is TMGTSDETLPFFTQFLQFEASYDDLPTFQ. A helical transmembrane segment spans residues 91 to 111; it reads FFVVAIAIVTGYLVLSLPFSV. Residues 112 to 130 lie on the Cytoplasmic side of the membrane; that stretch reads VTIVRPLAVAPRLLLLVLD. A helical membrane pass occupies residues 131 to 151; the sequence is TAALALDTAAASAAAAIVYLA. Residues 152–176 are Extracellular-facing; sequence HNGNTNTNWLPICQQFGDFCQKTSG. Residues 177–197 form a helical membrane-spanning segment; the sequence is AVVSAFASVTFLAILVVISGV. The Cytoplasmic segment spans residues 198-202; it reads SLKRP.

The protein belongs to the Casparian strip membrane proteins (CASP) family. Homodimer and heterodimers.

It is found in the cell membrane. In terms of biological role, regulates membrane-cell wall junctions and localized cell wall deposition. Required for establishment of the Casparian strip membrane domain (CSD) and the subsequent formation of Casparian strips, a cell wall modification of the root endodermis that determines an apoplastic barrier between the intraorganismal apoplasm and the extraorganismal apoplasm and prevents lateral diffusion. The polypeptide is Casparian strip membrane protein 4 (Arabidopsis lyrata subsp. lyrata (Lyre-leaved rock-cress)).